We begin with the raw amino-acid sequence, 400 residues long: Enoyl-[acyl-carrier-protein] reductase [NADH] (400 aa).

Residues 48 to 53 (GASTGY), 74 to 75 (FE), 111 to 112 (DA), and 139 to 140 (LA) contribute to the NAD(+) site. Tyrosine 225 is a binding site for substrate. Catalysis depends on tyrosine 235, which acts as the Proton donor. Residues lysine 244 and 273 to 275 (VVT) each bind NAD(+).

Belongs to the TER reductase family. Monomer.

The enzyme catalyses a 2,3-saturated acyl-[ACP] + NAD(+) = a (2E)-enoyl-[ACP] + NADH + H(+). The protein operates within lipid metabolism; fatty acid biosynthesis. In terms of biological role, involved in the final reduction of the elongation cycle of fatty acid synthesis (FAS II). Catalyzes the reduction of a carbon-carbon double bond in an enoyl moiety that is covalently linked to an acyl carrier protein (ACP). This chain is Enoyl-[acyl-carrier-protein] reductase [NADH], found in Burkholderia lata (strain ATCC 17760 / DSM 23089 / LMG 22485 / NCIMB 9086 / R18194 / 383).